We begin with the raw amino-acid sequence, 179 residues long: Large ribosomal subunit protein uL5 (179 aa).

The protein belongs to the universal ribosomal protein uL5 family. Part of the 50S ribosomal subunit; part of the 5S rRNA/L5/L18/L25 subcomplex. Contacts the 5S rRNA and the P site tRNA. Forms a bridge to the 30S subunit in the 70S ribosome.

Its function is as follows. This is one of the proteins that bind and probably mediate the attachment of the 5S RNA into the large ribosomal subunit, where it forms part of the central protuberance. In the 70S ribosome it contacts protein S13 of the 30S subunit (bridge B1b), connecting the 2 subunits; this bridge is implicated in subunit movement. Contacts the P site tRNA; the 5S rRNA and some of its associated proteins might help stabilize positioning of ribosome-bound tRNAs. In Neisseria meningitidis serogroup C (strain 053442), this protein is Large ribosomal subunit protein uL5.